A 229-amino-acid polypeptide reads, in one-letter code: Potassium/proton antiporter CemA (229 aa).

Transmembrane regions (helical) follow at residues 7–27 (FTSL…SLSF), 114–134 (IICF…LVIL), 145–165 (LSDT…IGFH), and 189–209 (ILSS…KFWV).

Belongs to the CemA family.

The protein localises to the plastid. Its subcellular location is the chloroplast inner membrane. It catalyses the reaction K(+)(in) + H(+)(out) = K(+)(out) + H(+)(in). In terms of biological role, contributes to K(+)/H(+) antiport activity by supporting proton efflux to control proton extrusion and homeostasis in chloroplasts in a light-dependent manner to modulate photosynthesis. Prevents excessive induction of non-photochemical quenching (NPQ) under continuous-light conditions. Indirectly promotes efficient inorganic carbon uptake into chloroplasts. In Daucus carota (Wild carrot), this protein is Potassium/proton antiporter CemA.